We begin with the raw amino-acid sequence, 264 residues long: uncharacterized protein (264 aa).

The N-terminal stretch at 1–26 (MMKKLFHSTLIVLLFFSFFGVQPIHA) is a signal peptide.

This is an uncharacterized protein from Bacillus subtilis (strain 168).